Reading from the N-terminus, the 225-residue chain is MGKVVSVILAGGKGKRMGAEVSKQFIEINGKPIIYYTLKAFEECKGIDEIILVLPKDEIDYFKREIEPRFDFKISKIIEGGKERQDSVYNALNSIGDCDIVLIHDGARAFVSNKIIEDGIKYSREFGAAAPGVMPKDTIKVKNLEGFSVDTPNRASLVAVQTPQCFKYNLIKKGHNKVKNEKIQVTDDTMIVELLGEKVYLFEGDYKNIKVTTPEDLILAEHFVK.

This sequence belongs to the IspD/TarI cytidylyltransferase family. IspD subfamily.

It carries out the reaction 2-C-methyl-D-erythritol 4-phosphate + CTP + H(+) = 4-CDP-2-C-methyl-D-erythritol + diphosphate. Its pathway is isoprenoid biosynthesis; isopentenyl diphosphate biosynthesis via DXP pathway; isopentenyl diphosphate from 1-deoxy-D-xylulose 5-phosphate: step 2/6. Catalyzes the formation of 4-diphosphocytidyl-2-C-methyl-D-erythritol from CTP and 2-C-methyl-D-erythritol 4-phosphate (MEP). The sequence is that of 2-C-methyl-D-erythritol 4-phosphate cytidylyltransferase from Clostridium perfringens (strain ATCC 13124 / DSM 756 / JCM 1290 / NCIMB 6125 / NCTC 8237 / Type A).